Here is a 90-residue protein sequence, read N- to C-terminus: Early nodulin-36A (90 aa).

This Glycine max (Soybean) protein is Early nodulin-36A.